Reading from the N-terminus, the 163-residue chain is 6,7-dimethyl-8-ribityllumazine synthase (163 aa).

5-amino-6-(D-ribitylamino)uracil contacts are provided by residues Phe-27, Ala-58–Glu-60, and Cys-87–Val-89. Position 92–93 (Asp-92–Thr-93) interacts with (2S)-2-hydroxy-3-oxobutyl phosphate. The Proton donor role is filled by His-95. Asn-120 contacts 5-amino-6-(D-ribitylamino)uracil. Position 134 (Arg-134) interacts with (2S)-2-hydroxy-3-oxobutyl phosphate.

It belongs to the DMRL synthase family.

It carries out the reaction (2S)-2-hydroxy-3-oxobutyl phosphate + 5-amino-6-(D-ribitylamino)uracil = 6,7-dimethyl-8-(1-D-ribityl)lumazine + phosphate + 2 H2O + H(+). Its pathway is cofactor biosynthesis; riboflavin biosynthesis; riboflavin from 2-hydroxy-3-oxobutyl phosphate and 5-amino-6-(D-ribitylamino)uracil: step 1/2. Its function is as follows. Catalyzes the formation of 6,7-dimethyl-8-ribityllumazine by condensation of 5-amino-6-(D-ribitylamino)uracil with 3,4-dihydroxy-2-butanone 4-phosphate. This is the penultimate step in the biosynthesis of riboflavin. This is 6,7-dimethyl-8-ribityllumazine synthase from Nitrobacter winogradskyi (strain ATCC 25391 / DSM 10237 / CIP 104748 / NCIMB 11846 / Nb-255).